The chain runs to 63 residues: Large ribosomal subunit protein uL29 (63 aa).

It belongs to the universal ribosomal protein uL29 family.

This chain is Large ribosomal subunit protein uL29, found in Sodalis glossinidius (strain morsitans).